Here is a 55-residue protein sequence, read N- to C-terminus: Trypsin inhibitor ClTI-1 (55 aa).

In terms of domain architecture, Kazal-like spans 1-55 (SIPPACDKYSRLPGCPRDYSPVCGTDGKTYPNECVLCLSNSEENKNVQIYKSGMC). 3 cysteine pairs are disulfide-bonded: C6–C37, C15–C34, and C23–C55.

It localises to the secreted. Functionally, inhibits trypsin and plasmin. This Gallus gallus (Chicken) protein is Trypsin inhibitor ClTI-1.